We begin with the raw amino-acid sequence, 102 residues long: 10 kDa heat shock protein, mitochondrial (102 aa).

Ala-2 is modified (N-acetylalanine). At Lys-8 the chain carries N6-acetyllysine. Lys-28 bears the N6-succinyllysine mark. The residue at position 40 (Lys-40) is an N6-acetyllysine; alternate. N6-malonyllysine; alternate occurs at positions 40, 54, and 56. Residues Lys-40, Lys-54, Lys-56, Lys-66, and Lys-70 each carry the N6-succinyllysine; alternate modification. N6-acetyllysine; alternate is present on residues Lys-56, Lys-66, and Lys-70. Thr-79 bears the Phosphothreonine mark. N6-acetyllysine; alternate is present on residues Lys-80 and Lys-86. N6-succinyllysine; alternate is present on residues Lys-80 and Lys-86. Lys-99 carries the N6-acetyllysine modification.

It belongs to the GroES chaperonin family. In terms of assembly, homoheptamer arranged in a ring structure. 2 heptameric Hsp10 rings interact with a Hsp60 tetradecamer in the structure of a back-to-back double heptameric ring to form the symmetrical football complex.

The protein resides in the mitochondrion matrix. In terms of biological role, co-chaperonin implicated in mitochondrial protein import and macromolecular assembly. Together with Hsp60, facilitates the correct folding of imported proteins. May also prevent misfolding and promote the refolding and proper assembly of unfolded polypeptides generated under stress conditions in the mitochondrial matrix. The functional units of these chaperonins consist of heptameric rings of the large subunit Hsp60, which function as a back-to-back double ring. In a cyclic reaction, Hsp60 ring complexes bind one unfolded substrate protein per ring, followed by the binding of ATP and association with 2 heptameric rings of the co-chaperonin Hsp10. This leads to sequestration of the substrate protein in the inner cavity of Hsp60 where, for a certain period of time, it can fold undisturbed by other cell components. Synchronous hydrolysis of ATP in all Hsp60 subunits results in the dissociation of the chaperonin rings and the release of ADP and the folded substrate protein. The chain is 10 kDa heat shock protein, mitochondrial (HSPE1) from Bos taurus (Bovine).